A 462-amino-acid polypeptide reads, in one-letter code: tRNA modification GTPase MnmE (462 aa).

Arg27, Glu89, and Arg128 together coordinate (6S)-5-formyl-5,6,7,8-tetrahydrofolate. The region spanning 223–383 (GLKIAIVGRP…LEAAILAAVG (161 aa)) is the TrmE-type G domain. Asn233 serves as a coordination point for K(+). GTP is bound by residues 233–238 (NVGKSS), 252–258 (TDLPGTT), and 277–280 (DTAG). Residue Ser237 coordinates Mg(2+). Residues Thr252, Leu254, and Thr257 each contribute to the K(+) site. Thr258 serves as a coordination point for Mg(2+). Lys462 serves as a coordination point for (6S)-5-formyl-5,6,7,8-tetrahydrofolate.

It belongs to the TRAFAC class TrmE-Era-EngA-EngB-Septin-like GTPase superfamily. TrmE GTPase family. Homodimer. Heterotetramer of two MnmE and two MnmG subunits. Requires K(+) as cofactor.

Its subcellular location is the cytoplasm. Exhibits a very high intrinsic GTPase hydrolysis rate. Involved in the addition of a carboxymethylaminomethyl (cmnm) group at the wobble position (U34) of certain tRNAs, forming tRNA-cmnm(5)s(2)U34. The polypeptide is tRNA modification GTPase MnmE (Synechococcus elongatus (strain ATCC 33912 / PCC 7942 / FACHB-805) (Anacystis nidulans R2)).